Consider the following 481-residue polypeptide: Arylsulfatase (481 aa).

Ca(2+)-binding residues include D11, Q12, and C51. The active-site Nucleophile is the C51. At C51 the chain carries 3-oxoalanine (Cys). Residue H102 is part of the active site. Residues D302 and H303 each coordinate Ca(2+).

The protein belongs to the sulfatase family. Requires Ca(2+) as cofactor. Post-translationally, the conversion to 3-oxoalanine (also known as C-formylglycine, FGly), of a serine or cysteine residue in prokaryotes and of a cysteine residue in eukaryotes, is critical for catalytic activity.

The enzyme catalyses an aryl sulfate + H2O = a phenol + sulfate + H(+). Its function is as follows. Has sulfatase activity toward para-nitrophenyl sulfate, which is increased in presence of calcium ion. This chain is Arylsulfatase, found in Clostridium perfringens (strain 13 / Type A).